The primary structure comprises 207 residues: Histidine biosynthesis bifunctional protein HisIE (207 aa).

A phosphoribosyl-AMP cyclohydrolase region spans residues 1–115 (MLSKKENLLK…FFLKENTLNF (115 aa)). Residues 116–207 (LSKLEDLIED…NLKKRKTEKL (92 aa)) form a phosphoribosyl-ATP pyrophosphohydrolase region.

In the N-terminal section; belongs to the PRA-CH family. This sequence in the C-terminal section; belongs to the PRA-PH family.

The protein resides in the cytoplasm. It carries out the reaction 1-(5-phospho-beta-D-ribosyl)-ATP + H2O = 1-(5-phospho-beta-D-ribosyl)-5'-AMP + diphosphate + H(+). The catalysed reaction is 1-(5-phospho-beta-D-ribosyl)-5'-AMP + H2O = 1-(5-phospho-beta-D-ribosyl)-5-[(5-phospho-beta-D-ribosylamino)methylideneamino]imidazole-4-carboxamide. It participates in amino-acid biosynthesis; L-histidine biosynthesis; L-histidine from 5-phospho-alpha-D-ribose 1-diphosphate: step 2/9. It functions in the pathway amino-acid biosynthesis; L-histidine biosynthesis; L-histidine from 5-phospho-alpha-D-ribose 1-diphosphate: step 3/9. The protein is Histidine biosynthesis bifunctional protein HisIE (hisI) of Buchnera aphidicola subsp. Schizaphis graminum (strain Sg).